The primary structure comprises 163 residues: 6,7-dimethyl-8-ribityllumazine synthase 1 (163 aa).

Residues phenylalanine 27, 58–60, and 87–89 each bind 5-amino-6-(D-ribitylamino)uracil; these read ALE and CVV. 92–93 contributes to the (2S)-2-hydroxy-3-oxobutyl phosphate binding site; that stretch reads ET. Histidine 95 acts as the Proton donor in catalysis. Asparagine 120 is a binding site for 5-amino-6-(D-ribitylamino)uracil. Residue arginine 134 participates in (2S)-2-hydroxy-3-oxobutyl phosphate binding.

Belongs to the DMRL synthase family.

The catalysed reaction is (2S)-2-hydroxy-3-oxobutyl phosphate + 5-amino-6-(D-ribitylamino)uracil = 6,7-dimethyl-8-(1-D-ribityl)lumazine + phosphate + 2 H2O + H(+). It functions in the pathway cofactor biosynthesis; riboflavin biosynthesis; riboflavin from 2-hydroxy-3-oxobutyl phosphate and 5-amino-6-(D-ribitylamino)uracil: step 1/2. Its function is as follows. Catalyzes the formation of 6,7-dimethyl-8-ribityllumazine by condensation of 5-amino-6-(D-ribitylamino)uracil with 3,4-dihydroxy-2-butanone 4-phosphate. This is the penultimate step in the biosynthesis of riboflavin. This is 6,7-dimethyl-8-ribityllumazine synthase 1 from Rhodopseudomonas palustris (strain ATCC BAA-98 / CGA009).